Reading from the N-terminus, the 89-residue chain is Small ribosomal subunit protein uS15 (89 aa).

The protein belongs to the universal ribosomal protein uS15 family. In terms of assembly, part of the 30S ribosomal subunit. Forms a bridge to the 50S subunit in the 70S ribosome, contacting the 23S rRNA.

Its function is as follows. One of the primary rRNA binding proteins, it binds directly to 16S rRNA where it helps nucleate assembly of the platform of the 30S subunit by binding and bridging several RNA helices of the 16S rRNA. Forms an intersubunit bridge (bridge B4) with the 23S rRNA of the 50S subunit in the ribosome. The sequence is that of Small ribosomal subunit protein uS15 from Azobacteroides pseudotrichonymphae genomovar. CFP2.